A 674-amino-acid chain; its full sequence is DNA ligase (674 aa).

NAD(+) contacts are provided by residues Asp36–Asp40, Ser85–Leu86, and Glu116. Catalysis depends on Lys118, which acts as the N6-AMP-lysine intermediate. Residues Arg139, Glu176, Lys292, and Lys316 each contribute to the NAD(+) site. Residues Cys410, Cys413, Cys428, and Cys433 each contribute to the Zn(2+) site. A BRCT domain is found at Pro596 to Asn674.

Belongs to the NAD-dependent DNA ligase family. LigA subfamily. Mg(2+) serves as cofactor. Mn(2+) is required as a cofactor.

It carries out the reaction NAD(+) + (deoxyribonucleotide)n-3'-hydroxyl + 5'-phospho-(deoxyribonucleotide)m = (deoxyribonucleotide)n+m + AMP + beta-nicotinamide D-nucleotide.. Its function is as follows. DNA ligase that catalyzes the formation of phosphodiester linkages between 5'-phosphoryl and 3'-hydroxyl groups in double-stranded DNA using NAD as a coenzyme and as the energy source for the reaction. It is essential for DNA replication and repair of damaged DNA. The sequence is that of DNA ligase from Rippkaea orientalis (strain PCC 8801 / RF-1) (Cyanothece sp. (strain PCC 8801)).